The chain runs to 261 residues: Thiamine thiazole synthase (261 aa).

NAD(+) contacts are provided by residues serine 40, 59–60 (ER), glycine 67, valine 133, and 159–161 (HID). Fe cation is bound by residues aspartate 161 and histidine 176. Residues serine 179 and methionine 226 each coordinate NAD(+). Arginine 236 lines the glycine pocket.

This sequence belongs to the THI4 family. In terms of assembly, homooctamer; tetramer of dimers. Requires Fe(2+) as cofactor.

The enzyme catalyses hydrogen sulfide + glycine + NAD(+) = ADP-5-ethyl-4-methylthiazole-2-carboxylate + nicotinamide + 3 H2O + H(+). The protein operates within cofactor biosynthesis; thiamine diphosphate biosynthesis. Its function is as follows. Involved in the biosynthesis of the thiazole moiety of thiamine. Catalyzes the conversion of NAD and glycine to adenosine diphosphate 5-(2-hydroxyethyl)-4-methylthiazole-2-carboxylate (ADT), an adenylated thiazole intermediate, using free sulfide as a source of sulfur. The sequence is that of Thiamine thiazole synthase from Methanococcus maripaludis (strain C5 / ATCC BAA-1333).